The primary structure comprises 1072 residues: 5'-3' exoribonuclease 2 (1072 aa).

A coiled-coil region spans residues 118 to 144 (RRFRAAREAMEKEEDKQKFVELLKKQN). The CCHC-type zinc-finger motif lies at 269–286 (RLCKICGQKGHDAMNCKG). A compositionally biased stretch (basic and acidic residues) spans 414 to 435 (KETEDRREAGFKRRKLADEARQ). Disordered stretches follow at residues 414-459 (KETE…GFSF), 509-577 (QGTS…AEPT), 865-911 (ASRS…GGGG), and 943-1072 (GGGY…RGYR). Residues 518-543 (AESTETPAETAAAAPATEEQAAPPAA) are compositionally biased toward low complexity. Residues 892–911 (GPGGGQQGGRGRGGYQGGGG) show a composition bias toward gly residues. Pro residues predominate over residues 955 to 967 (GPPPGWQPPPPPG). Composition is skewed to gly residues over residues 983-1000 (AYGG…GSSR), 1025-1036 (YGQGGSRGGYQG), and 1056-1072 (GYRG…RGYR).

The protein belongs to the 5'-3' exonuclease family. XRN2/RAT1 subfamily. As to quaternary structure, interacts with rai1; the interaction is direct, stabilizes exr-1 protein structure and may stimulate its exoribonuclease activity. The interaction also stimulates rai1 pyrophosphohydrolase activity, probably by recruiting it to mRNA substrates.

The protein localises to the nucleus. Its function is as follows. Possesses 5'-&gt;3' exoribonuclease activity. Required for the processing of nuclear mRNA and rRNA precursors. May promote the termination of transcription by RNA polymerase II. Essential for vegetative cell growth and chromosome segregation. This Neurospora crassa (strain ATCC 24698 / 74-OR23-1A / CBS 708.71 / DSM 1257 / FGSC 987) protein is 5'-3' exoribonuclease 2 (exr-1).